Here is a 155-residue protein sequence, read N- to C-terminus: Small ribosomal subunit protein uS7c (155 aa).

The protein belongs to the universal ribosomal protein uS7 family. In terms of assembly, part of the 30S ribosomal subunit.

It localises to the plastid. The protein resides in the chloroplast. Functionally, one of the primary rRNA binding proteins, it binds directly to 16S rRNA where it nucleates assembly of the head domain of the 30S subunit. This chain is Small ribosomal subunit protein uS7c (rps7), found in Silene latifolia (White campion).